The chain runs to 185 residues: ATP-dependent protease subunit HslV (185 aa).

Residue T6 is part of the active site. Na(+) is bound by residues G162, C165, and T168.

It belongs to the peptidase T1B family. HslV subfamily. As to quaternary structure, a double ring-shaped homohexamer of HslV is capped on each side by a ring-shaped HslU homohexamer. The assembly of the HslU/HslV complex is dependent on binding of ATP.

The protein localises to the cytoplasm. It carries out the reaction ATP-dependent cleavage of peptide bonds with broad specificity.. With respect to regulation, allosterically activated by HslU binding. Functionally, protease subunit of a proteasome-like degradation complex believed to be a general protein degrading machinery. The chain is ATP-dependent protease subunit HslV from Nitratidesulfovibrio vulgaris (strain DSM 19637 / Miyazaki F) (Desulfovibrio vulgaris).